The following is a 440-amino-acid chain: tRNA(Ile)-lysidine synthase (440 aa).

31–36 (SGGADS) serves as a coordination point for ATP.

This sequence belongs to the tRNA(Ile)-lysidine synthase family.

The protein localises to the cytoplasm. It carries out the reaction cytidine(34) in tRNA(Ile2) + L-lysine + ATP = lysidine(34) in tRNA(Ile2) + AMP + diphosphate + H(+). Its function is as follows. Ligates lysine onto the cytidine present at position 34 of the AUA codon-specific tRNA(Ile) that contains the anticodon CAU, in an ATP-dependent manner. Cytidine is converted to lysidine, thus changing the amino acid specificity of the tRNA from methionine to isoleucine. This Borreliella afzelii (strain PKo) (Borrelia afzelii) protein is tRNA(Ile)-lysidine synthase.